Reading from the N-terminus, the 62-residue chain is Large ribosomal subunit protein eL37 (62 aa).

Zn(2+) is bound by residues Cys20, Cys23, Cys35, and Cys38. The C4-type zinc-finger motif lies at 20-38 (CRRCGRHSFNVAKGYCAAC).

This sequence belongs to the eukaryotic ribosomal protein eL37 family. The cofactor is Zn(2+).

Binds to the 23S rRNA. This Desulfurococcus amylolyticus (strain DSM 18924 / JCM 16383 / VKM B-2413 / 1221n) (Desulfurococcus kamchatkensis) protein is Large ribosomal subunit protein eL37.